The primary structure comprises 199 residues: MMEFVYPHTHLVAGVDEVGRGPLVGAVVTAAVILDPAKPIVGLNDSKKLSEKRRLALFDEIKEKALCWSLGRAEPHEIDELNILHATMLAMQRAVAGLSIVPEFVLIDGNRCPSLPMPSQAVVKGDSRVAEISAASILAKVTRDAEMATLDLAFPHYGFAQHKGYPTAVHLQKLQEHGATEHHRRSFGPVKRALGLASN.

The 190-residue stretch at 10–199 (HLVAGVDEVG…VKRALGLASN (190 aa)) folds into the RNase H type-2 domain. The a divalent metal cation site is built by Asp16, Glu17, and Asp108.

This sequence belongs to the RNase HII family. The cofactor is Mn(2+). Mg(2+) is required as a cofactor.

Its subcellular location is the cytoplasm. It carries out the reaction Endonucleolytic cleavage to 5'-phosphomonoester.. Functionally, endonuclease that specifically degrades the RNA of RNA-DNA hybrids. This chain is Ribonuclease HII, found in Klebsiella pneumoniae subsp. pneumoniae (strain ATCC 700721 / MGH 78578).